The sequence spans 380 residues: 4-hydroxy-3-methylbut-2-en-1-yl diphosphate synthase (flavodoxin) (380 aa).

Cysteine 279, cysteine 282, cysteine 314, and glutamate 321 together coordinate [4Fe-4S] cluster.

The protein belongs to the IspG family. [4Fe-4S] cluster is required as a cofactor.

The enzyme catalyses (2E)-4-hydroxy-3-methylbut-2-enyl diphosphate + oxidized [flavodoxin] + H2O + 2 H(+) = 2-C-methyl-D-erythritol 2,4-cyclic diphosphate + reduced [flavodoxin]. Its pathway is isoprenoid biosynthesis; isopentenyl diphosphate biosynthesis via DXP pathway; isopentenyl diphosphate from 1-deoxy-D-xylulose 5-phosphate: step 5/6. Its function is as follows. Converts 2C-methyl-D-erythritol 2,4-cyclodiphosphate (ME-2,4cPP) into 1-hydroxy-2-methyl-2-(E)-butenyl 4-diphosphate. In Tropheryma whipplei (strain TW08/27) (Whipple's bacillus), this protein is 4-hydroxy-3-methylbut-2-en-1-yl diphosphate synthase (flavodoxin).